Here is a 500-residue protein sequence, read N- to C-terminus: NAD(P)H-quinone oxidoreductase chain 4, chloroplastic (500 aa).

Transmembrane regions (helical) follow at residues 4-24 (FPWL…MLFL), 35-55 (YTIS…CYNF), 87-107 (IGTI…AFPV), 134-154 (LLLF…LLSM), 167-187 (FILY…GISL), 211-231 (ILFY…IPLH), 242-262 (HYST…YGLV), 272-292 (AHSM…IYAA), 305-325 (IAYS…SITD), 330-350 (GAIL…FLAG), 386-406 (LALP…GIIT), 416-436 (IFII…LLSM), and 462-482 (LFLS…PDFV).

Belongs to the complex I subunit 4 family.

The protein localises to the plastid. The protein resides in the chloroplast thylakoid membrane. The enzyme catalyses a plastoquinone + NADH + (n+1) H(+)(in) = a plastoquinol + NAD(+) + n H(+)(out). It catalyses the reaction a plastoquinone + NADPH + (n+1) H(+)(in) = a plastoquinol + NADP(+) + n H(+)(out). The polypeptide is NAD(P)H-quinone oxidoreductase chain 4, chloroplastic (Crucihimalaya wallichii (Rock-cress)).